A 214-amino-acid polypeptide reads, in one-letter code: Adenylate kinase (214 aa).

Residue 10 to 15 coordinates ATP; sequence GAGKGT. The segment at 30–59 is NMP; that stretch reads STGDMLRAAVKAGTPLGLEAKKVMDAGQLV. AMP-binding positions include Thr31, Arg36, 57–59, 85–88, and Gln92; these read QLV and GFPR. Residues 122 to 159 are LID; sequence GRRVHPGSGRVYHIVYNPPKVEGKDDVTGEDLAIRPDD. ATP contacts are provided by residues Arg123 and 132-133; that span reads VY. Residues Arg156 and Arg167 each coordinate AMP. Gln200 is a binding site for ATP.

The protein belongs to the adenylate kinase family. As to quaternary structure, monomer.

It localises to the cytoplasm. The catalysed reaction is AMP + ATP = 2 ADP. The protein operates within purine metabolism; AMP biosynthesis via salvage pathway; AMP from ADP: step 1/1. In terms of biological role, catalyzes the reversible transfer of the terminal phosphate group between ATP and AMP. Plays an important role in cellular energy homeostasis and in adenine nucleotide metabolism. This chain is Adenylate kinase, found in Shewanella loihica (strain ATCC BAA-1088 / PV-4).